A 344-amino-acid chain; its full sequence is L-rhamnose-proton symporter (344 aa).

10 helical membrane passes run 4–24 (AITM…CFYA), 38–58 (WSVG…ALLL), 68–88 (FNLS…IGNI), 101–121 (MGIG…TPII), 137–157 (TLLG…AGQL), 175–195 (LLLA…MNAA), 214–234 (LPSY…FCFI), 259–279 (ILLS…YAWG), 290–310 (MSWM…GLVL), and 321–341 (VAVL…VGLG).

It belongs to the L-rhamnose transporter (TC 2.A.7.6) family.

It is found in the cell inner membrane. It catalyses the reaction L-rhamnopyranose(in) + H(+)(in) = L-rhamnopyranose(out) + H(+)(out). Uptake of L-rhamnose across the cytoplasmic membrane with the concomitant transport of protons into the cell (symport system). In Salmonella gallinarum (strain 287/91 / NCTC 13346), this protein is L-rhamnose-proton symporter.